A 413-amino-acid chain; its full sequence is Peptidase T (413 aa).

Position 84 (H84) interacts with Zn(2+). D86 is an active-site residue. Residue D147 participates in Zn(2+) binding. E181 acts as the Proton acceptor in catalysis. 3 residues coordinate Zn(2+): E182, D204, and H386.

This sequence belongs to the peptidase M20B family. Zn(2+) serves as cofactor.

It is found in the cytoplasm. It carries out the reaction Release of the N-terminal residue from a tripeptide.. Its function is as follows. Cleaves the N-terminal amino acid of tripeptides. The chain is Peptidase T from Ligilactobacillus salivarius (strain UCC118) (Lactobacillus salivarius).